The primary structure comprises 397 residues: Methylthioribose kinase (397 aa).

ATP is bound by residues Asn44, Lys61, and 115-117 (EDL). Asp233 serves as a coordination point for substrate. 250–252 (DPE) is a binding site for ATP. Arg340 is a substrate binding site.

This sequence belongs to the methylthioribose kinase family. As to quaternary structure, homodimer.

It catalyses the reaction 5-(methylsulfanyl)-D-ribose + ATP = 5-(methylsulfanyl)-alpha-D-ribose 1-phosphate + ADP + H(+). It participates in amino-acid biosynthesis; L-methionine biosynthesis via salvage pathway; S-methyl-5-thio-alpha-D-ribose 1-phosphate from S-methyl-5'-thioadenosine (hydrolase route): step 2/2. In terms of biological role, catalyzes the phosphorylation of methylthioribose into methylthioribose-1-phosphate. The polypeptide is Methylthioribose kinase (mtnK) (Bacillus subtilis (strain 168)).